Reading from the N-terminus, the 273-residue chain is Nicotinamide N-methyltransferase (273 aa).

Residues Y35, Y40, 74-75, Y80, D96, N101, and 152-153 each bind S-adenosyl-L-methionine; these read GA and NV.

This sequence belongs to the class I-like SAM-binding methyltransferase superfamily. NNMT/PNMT/TEMT family.

The catalysed reaction is nicotinamide + S-adenosyl-L-methionine = 1-methylnicotinamide + S-adenosyl-L-homocysteine. Functionally, catalyzes the N-methylation of nicotinamide and other pyridines to form pyridinium ions. Involved in regulation of lifespan extension downstream of the sirtuin sir-2.1, probably through its role in nicotinic acid metabolism. The chain is Nicotinamide N-methyltransferase from Caenorhabditis elegans.